Consider the following 239-residue polypeptide: Ribosomal RNA small subunit methyltransferase G (239 aa).

S-adenosyl-L-methionine-binding positions include Gly-77, Phe-82, 128 to 129, and Arg-147; that span reads AE.

It belongs to the methyltransferase superfamily. RNA methyltransferase RsmG family.

The protein localises to the cytoplasm. In terms of biological role, specifically methylates the N7 position of guanine in position 535 of 16S rRNA. The polypeptide is Ribosomal RNA small subunit methyltransferase G (Bacillus cereus (strain ZK / E33L)).